Consider the following 130-residue polypeptide: Small ribosomal subunit protein uS8 (130 aa).

It belongs to the universal ribosomal protein uS8 family. As to quaternary structure, part of the 30S ribosomal subunit.

One of the primary rRNA binding proteins, it binds directly to 16S rRNA central domain where it helps coordinate assembly of the platform of the 30S subunit. This Methanosphaera stadtmanae (strain ATCC 43021 / DSM 3091 / JCM 11832 / MCB-3) protein is Small ribosomal subunit protein uS8.